We begin with the raw amino-acid sequence, 779 residues long: Molybdenum cofactor sulfurase (779 aa).

Residue Lys-247 is modified to N6-(pyridoxal phosphate)lysine. Residue Cys-409 is part of the active site. In terms of domain architecture, MOSC spans 624–779; the sequence is SQSLGLEGVR…LTCGDVIVVS (156 aa). At Ser-732 the chain carries Phosphoserine.

Belongs to the class-V pyridoxal-phosphate-dependent aminotransferase family. MOCOS subfamily. Pyridoxal 5'-phosphate serves as cofactor.

The enzyme catalyses Mo-molybdopterin + L-cysteine + AH2 = thio-Mo-molybdopterin + L-alanine + A + H2O. It participates in cofactor biosynthesis; molybdopterin biosynthesis. Its function is as follows. Sulfurates the molybdenum cofactor. Sulfation of molybdenum is essential for xanthine dehydrogenase (XDH) and aldehyde oxidase (ADO) enzymes in which molybdenum cofactor is liganded by 1 oxygen and 1 sulfur atom in active form. This is Molybdenum cofactor sulfurase from Drosophila mojavensis (Fruit fly).